We begin with the raw amino-acid sequence, 190 residues long: MTASASSFSSSQGVQQPSIYSFSQITRSLFLSNGVAANDKLLLSSNRITAIVNASVEVVNVFFEGIQYIKVPVTDARDSRLYDFFDPIADLIHTIDMRQGRTLLHCMAGVSRSASLCLAYLMKYHSMSLLDAHTWTKSRRPIIRPNNGFWEQLINYEFKLFNNNTVRMINSPVGNIPDIYEKDLRMMISM.

The region spanning 21-162 (SFSQITRSLF…LINYEFKLFN (142 aa)) is the Tyrosine-protein phosphatase domain. The interval 43 to 128 (LSSNRITAIV…AYLMKYHSMS (86 aa)) is sufficient for mitochondrial localization. C106 serves as the catalytic Phosphocysteine intermediate.

This sequence belongs to the protein-tyrosine phosphatase family. Non-receptor class dual specificity subfamily. Microtubule inner protein component of sperm flagellar doublet microtubules. In terms of tissue distribution, expressed in testis.

It localises to the cytoplasm. The protein resides in the nucleus. It is found in the mitochondrion inner membrane. The protein localises to the cytoskeleton. Its subcellular location is the flagellum axoneme. It carries out the reaction O-phospho-L-tyrosyl-[protein] + H2O = L-tyrosyl-[protein] + phosphate. The enzyme catalyses O-phospho-L-seryl-[protein] + H2O = L-seryl-[protein] + phosphate. It catalyses the reaction O-phospho-L-threonyl-[protein] + H2O = L-threonyl-[protein] + phosphate. Its function is as follows. Protein phosphatase component of the sperm flagellar doublet microtubules. May act as a regulator of sperm motility by mediating dephosphorylation of sperm doublet microtubule proteins. Can dephosphorylate single and diphosphorylated synthetic MAPK peptides, with preference for the phosphotyrosine and diphosphorylated forms over phosphothreonine. The sequence is that of Dual specificity protein phosphatase 21 (DUSP21) from Homo sapiens (Human).